The following is a 278-amino-acid chain: Ribonuclease HII (278 aa).

The 189-residue stretch at 71 to 259 folds into the RNase H type-2 domain; sequence WPVAGCDEAG…VAAAWDKHAP (189 aa). Residues Asp77, Glu78, and Asp168 each coordinate a divalent metal cation.

The protein belongs to the RNase HII family. Mn(2+) serves as cofactor. Mg(2+) is required as a cofactor.

Its subcellular location is the cytoplasm. The catalysed reaction is Endonucleolytic cleavage to 5'-phosphomonoester.. Endonuclease that specifically degrades the RNA of RNA-DNA hybrids. This chain is Ribonuclease HII, found in Rhodopseudomonas palustris (strain BisA53).